The chain runs to 394 residues: MYKTFLIKYAEIAIKGKNRYIFEDALVKNIKYQLRNVDGSFEVRKESGRVYVETDGDYDYDETVATLSRIFGIVGICPVELHEDEGFDKLCEAVIEHINHVYKDKSFTFKVNARRARKNYPMTSMEINAAVGEKVLEAFPETRVDVHNPQVMINIEIRPMINIYSEEIPGPGGMPLGTAGKAMLLLSGGIDSPVAGYMIAKRGVVINATYFHAPPYTSERAKQKVVDLAKKVARYSGRIKLHVVNFTDIQLAIYEKCPHDELTIIMRRYMMKIAEHFADEDKCLGLITGESIGQVASQTMQSLAATNEVCHMPVYRPLIAMDKNDIIDISNKIDTYETSILPYEDCCTIFVAKHPVTKPNINRIKKSEERLNDVIDELMKTAIDTTEVIMVDAE.

The region spanning Asp61–Ile168 is the THUMP domain. ATP-binding positions include Leu185 to Leu186, Tyr210 to Phe211, Arg267, Gly289, and Gln298.

Belongs to the ThiI family.

It is found in the cytoplasm. It catalyses the reaction [ThiI sulfur-carrier protein]-S-sulfanyl-L-cysteine + a uridine in tRNA + 2 reduced [2Fe-2S]-[ferredoxin] + ATP + H(+) = [ThiI sulfur-carrier protein]-L-cysteine + a 4-thiouridine in tRNA + 2 oxidized [2Fe-2S]-[ferredoxin] + AMP + diphosphate. The catalysed reaction is [ThiS sulfur-carrier protein]-C-terminal Gly-Gly-AMP + S-sulfanyl-L-cysteinyl-[cysteine desulfurase] + AH2 = [ThiS sulfur-carrier protein]-C-terminal-Gly-aminoethanethioate + L-cysteinyl-[cysteine desulfurase] + A + AMP + 2 H(+). It functions in the pathway cofactor biosynthesis; thiamine diphosphate biosynthesis. In terms of biological role, catalyzes the ATP-dependent transfer of a sulfur to tRNA to produce 4-thiouridine in position 8 of tRNAs, which functions as a near-UV photosensor. Also catalyzes the transfer of sulfur to the sulfur carrier protein ThiS, forming ThiS-thiocarboxylate. This is a step in the synthesis of thiazole, in the thiamine biosynthesis pathway. The sulfur is donated as persulfide by IscS. The sequence is that of Probable tRNA sulfurtransferase from Agathobacter rectalis (strain ATCC 33656 / DSM 3377 / JCM 17463 / KCTC 5835 / VPI 0990) (Eubacterium rectale).